Here is a 728-residue protein sequence, read N- to C-terminus: Phosphoribosylformylglycinamidine synthase subunit PurL (728 aa).

His-42 is a catalytic residue. The ATP site is built by Tyr-45 and Lys-84. Glu-86 contributes to the Mg(2+) binding site. Substrate is bound by residues 87–90 (SHNH) and Arg-109. The active-site Proton acceptor is His-88. A Mg(2+)-binding site is contributed by Asp-110. Substrate is bound at residue Gln-237. Asp-265 contributes to the Mg(2+) binding site. 309–311 (ESQ) is a substrate binding site. The ATP site is built by Asp-491 and Gly-528. Asn-529 serves as a coordination point for Mg(2+). Substrate is bound at residue Ser-531.

Belongs to the FGAMS family. In terms of assembly, monomer. Part of the FGAM synthase complex composed of 1 PurL, 1 PurQ and 2 PurS subunits.

It is found in the cytoplasm. It carries out the reaction N(2)-formyl-N(1)-(5-phospho-beta-D-ribosyl)glycinamide + L-glutamine + ATP + H2O = 2-formamido-N(1)-(5-O-phospho-beta-D-ribosyl)acetamidine + L-glutamate + ADP + phosphate + H(+). The protein operates within purine metabolism; IMP biosynthesis via de novo pathway; 5-amino-1-(5-phospho-D-ribosyl)imidazole from N(2)-formyl-N(1)-(5-phospho-D-ribosyl)glycinamide: step 1/2. Part of the phosphoribosylformylglycinamidine synthase complex involved in the purines biosynthetic pathway. Catalyzes the ATP-dependent conversion of formylglycinamide ribonucleotide (FGAR) and glutamine to yield formylglycinamidine ribonucleotide (FGAM) and glutamate. The FGAM synthase complex is composed of three subunits. PurQ produces an ammonia molecule by converting glutamine to glutamate. PurL transfers the ammonia molecule to FGAR to form FGAM in an ATP-dependent manner. PurS interacts with PurQ and PurL and is thought to assist in the transfer of the ammonia molecule from PurQ to PurL. This chain is Phosphoribosylformylglycinamidine synthase subunit PurL, found in Campylobacter jejuni (strain RM1221).